Consider the following 177-residue polypeptide: MRIDAISIGKNPPDDINVIVEVPVGGHPIKYEMDKDAGALIVDRFLYTPMTYPGNYGFVPHTLSDDGDPIDVLICNTRPLVPGCVINVRPIGVMIMEDDGGKDEKILAVPAPKLTQRYDKVHNYTDLPEITLKQIEHFFEHYKDLEPGKWVKMGGWQDVDVAKKLIVEAIERYKTQG.

Substrate contacts are provided by K30, R44, and Y56. Mg(2+) contacts are provided by D66, D71, and D103. Y142 contributes to the substrate binding site.

This sequence belongs to the PPase family. As to quaternary structure, homohexamer. Mg(2+) serves as cofactor.

The protein resides in the cytoplasm. It carries out the reaction diphosphate + H2O = 2 phosphate + H(+). Functionally, catalyzes the hydrolysis of inorganic pyrophosphate (PPi) forming two phosphate ions. This is Inorganic pyrophosphatase from Agrobacterium fabrum (strain C58 / ATCC 33970) (Agrobacterium tumefaciens (strain C58)).